We begin with the raw amino-acid sequence, 237 residues long: MFVFILLSLAAVLQQSFGNVDFNSESPRIKAKQREIVDKHNAFRRSVRPTASNMLRMEWYSEAASNAERWAYRCVLDHSPETSRILNGIQCGENIYMSSIPRTWIDIIKLWHDEYKNFIYGVGANPPGSIIGHYTQIVWYKSYRIGCAASYCPSSSYDYFYVCQYCPTGNFGGLTATPYKSGPTCGDCPSACDNGLCTNPCSREDVFTNCKSLVAKSNCQDDYIRKNCLATCFCPNK.

The N-terminal stretch at 1–18 is a signal peptide; sequence MFVFILLSLAAVLQQSFG. Positions 37 to 165 constitute an SCP domain; the sequence is VDKHNAFRRS…SYDYFYVCQY (129 aa). Cystine bridges form between C74–C152, C91–C166, C147–C163, C185–C192, C188–C197, C201–C234, and C219–C232. Positions 201–234 constitute a ShKT domain; that stretch reads CSREDVFTNCKSLVAKSNCQDDYIRKNCLATCFC.

The protein belongs to the CRISP family. As to expression, expressed by the venom gland.

The protein localises to the secreted. In terms of biological role, weakly blocks contraction of smooth muscle elicited by high potassium-induced depolarization, but does not block caffeine-stimulated contraction. May target voltage-gated calcium channels on smooth muscle. This chain is Cysteine-rich venom protein DIS3, found in Dispholidus typus (Boomslang).